The primary structure comprises 126 residues: MAIAKAEILDAIANMTVLELSQLIKEMEEKFGVSAAAAAVVAAAPAAGAAAAPAEEQTEFTVMLTAVGESKVNVIKVVRAVTGLGLKEAKDLVDGAPKPVKEGIAKADAEAIQKQLAEAGATAEIK.

It belongs to the bacterial ribosomal protein bL12 family. Homodimer. Part of the ribosomal stalk of the 50S ribosomal subunit. Forms a multimeric L10(L12)X complex, where L10 forms an elongated spine to which 2 to 4 L12 dimers bind in a sequential fashion. Binds GTP-bound translation factors.

Its function is as follows. Forms part of the ribosomal stalk which helps the ribosome interact with GTP-bound translation factors. Is thus essential for accurate translation. This is Large ribosomal subunit protein bL12 from Nitrosospira multiformis (strain ATCC 25196 / NCIMB 11849 / C 71).